The primary structure comprises 435 residues: F-box only protein 9 (435 aa).

Residues 1 to 25 are disordered; sequence MAEAEEDCHSDAVRVGDEGHESPAE. The segment covering 7-25 has biased composition (basic and acidic residues); it reads DCHSDAVRVGDEGHESPAE. The stretch at 82–115 is one TPR repeat; the sequence is ARELFLKAVEEEQNGALYEAIKFYRRAMQLVPDI. Position 124 is a phosphoserine (serine 124). Positions 173–224 constitute an F-box domain; that stretch reads QTHISVLPMEVLMYIFRWVVSSDLDLRSLEQLSLVCRGFYICARDPEIWRLA.

Part of the SCF (SKP1-CUL1-F-box) E3 ubiquitin-protein ligase complex SCF(FBXO9) composed of CUL1, SKP1, RBX1 and FBXO9. Interacts with TTI1 and TELO2; when TTI1 and TELO2 are phosphorylated by CK2.

The protein resides in the cytoplasm. The protein operates within protein modification; protein ubiquitination. Functionally, substrate recognition component of a SCF (SKP1-CUL1-F-box protein) E3 ubiquitin-protein ligase complex which mediates the ubiquitination and subsequent proteasomal degradation of target proteins and plays a role in several biological processes such as cell cycle, cell proliferation, or maintenance of chromosome stability. Ubiquitinates mTORC1-bound TTI1 and TELO2 when they are phosphorylated by CK2 following growth factor deprivation, leading to their degradation. In contrast, does not mediate ubiquitination of TTI1 and TELO2 when they are part of the mTORC2 complex. As a consequence, mTORC1 is inactivated to restrain cell growth and protein translation, while mTORC2 is the activated due to the relief of feedback inhibition by mTORC1. Plays a role in maintaining epithelial cell survival by regulating the turn-over of chromatin modulator PRMT4 through ubiquitination and degradation by the proteasomal pathway. Also regulates PPARgamma stability by facilitating PPARgamma/PPARG ubiquitination and thereby plays a role in adipocyte differentiation. This is F-box only protein 9 (Fbxo9) from Rattus norvegicus (Rat).